The sequence spans 491 residues: Serine/threonine-protein kinase 3 (491 aa).

Residue Met1 is modified to N-acetylmethionine. The residue at position 15 (Ser15) is a Phosphoserine; by PLK1. A Protein kinase domain is found at 27–278; the sequence is FDVLEKLGEG…ATQLLQHPFI (252 aa). ATP-binding positions include 33-41 and Lys56; that span reads LGEGSYGSV. Thr117 is modified (phosphothreonine; by PKB/AKT1). Asp146 (proton acceptor) is an active-site residue. Positions 151 and 164 each coordinate Mg(2+). 2 positions are modified to phosphothreonine; by autocatalysis: Thr174 and Thr180. Positions 287-328 form a coiled coil; it reads LRDLITEAMEIKAKRHEEQQRELEEEEENSDEDELDSHTMVK. A disordered region spans residues 301–327; sequence RHEEQQRELEEEEENSDEDELDSHTMV. Positions 309–321 are enriched in acidic residues; the sequence is LEEEEENSDEDEL. Position 316 is a phosphoserine (Ser316). Phosphothreonine; by autocatalysis occurs at positions 336 and 378. The tract at residues 370 to 392 is disordered; that stretch reads EDEEEEDGTMKRNATSPQVQRPS. Polar residues predominate over residues 381–390; sequence RNATSPQVQR. Thr384 bears the Phosphothreonine; by PKB/AKT1 mark. Phosphoserine is present on residues Ser385 and Ser444. The SARAH domain occupies 437 to 484; that stretch reads FDFLKNLSLEELQMRLKALDPMMEREIEELRQRYTAKRQPILDAMDAK. Residues 442-475 are a coiled coil; that stretch reads NLSLEELQMRLKALDPMMEREIEELRQRYTAKRQ.

The protein belongs to the protein kinase superfamily. STE Ser/Thr protein kinase family. STE20 subfamily. Homodimer; mediated via the coiled-coil region. Interacts with NORE1, which inhibits autoactivation. Interacts with and stabilizes SAV1. Interacts with RAF1, which prevents dimerization and phosphorylation. Interacts with RASSF1. Interacts (via SARAH domain) with isoform 1 of NEK2. Interacts with ESR1 only in the presence of SAV1. Interacts with PKB/AKT1. Forms a tripartite complex with MOBKL1B and STK38. Interacts with RASSF2 (via SARAH domain). Interacts with DLG5 (via PDZ domain 3). Interacts with LATS1; this interaction is inhibited in the presence of DLG5. Interacts with MARK3 in the presence of DLG5. Interacts with RASSF5; this interaction inhibits STK3 autoactivation through heterodimerization. Interacts (when phosphorylated) with SLMAP (via FHA domain); the interaction associates STK3 with the STRIPAK complex. Mg(2+) is required as a cofactor. In terms of processing, autophosphorylated on two residues Thr-174 and Thr-180, leading to activation. Phosphorylation at Thr-117 and Thr-384 by PKB/AKT1, leads to inhibition of its: cleavage, kinase activity, autophosphorylation at Thr-180, binding to RASSF1 and nuclear translocation, and increase in its binding to RAF1. Phosphorylated at Ser-15 by PLK1, leading to activation. When autophosphorylated at Thr-180, recruits STRIPAK complex and promotes PP2A-mediated dephosphorylation and inactivation of STK3. Post-translationally, proteolytically cleaved by caspase-3 during apoptosis. Proteolytic cleavage results in kinase activation and nuclear translocation of the truncated form (MST1/N). Ubiquitinated by TRIM69; leading to its redistribution to the perinuclear cytoskeleton, where it is phosphorylated by PLK1 and subsequently activated. Expressed at high levels in adult kidney, skeletal and placenta tissues and at very low levels in adult heart, lung and brain tissues.

The protein localises to the cytoplasm. It is found in the nucleus. The protein resides in the cytoskeleton. It localises to the microtubule organizing center. Its subcellular location is the centrosome. It carries out the reaction L-seryl-[protein] + ATP = O-phospho-L-seryl-[protein] + ADP + H(+). It catalyses the reaction L-threonyl-[protein] + ATP = O-phospho-L-threonyl-[protein] + ADP + H(+). Inhibited by the C-terminal non-catalytic region. Activated by caspase-cleavage. Full activation also requires homodimerization and autophosphorylation of Thr-180, which are inhibited by the proto-oncogene product RAF1. Activated by RASSF1 which acts by preventing its dephosphorylation. When autophosphorylated at Thr-180, recruits STRIPAK complex and promotes PP2A-mediated dephosphorylation and inactivation of STK3. Stress-activated, pro-apoptotic kinase which, following caspase-cleavage, enters the nucleus and induces chromatin condensation followed by internucleosomal DNA fragmentation. Key component of the Hippo signaling pathway which plays a pivotal role in organ size control and tumor suppression by restricting proliferation and promoting apoptosis. The core of this pathway is composed of a kinase cascade wherein STK3/MST2 and STK4/MST1, in complex with its regulatory protein SAV1, phosphorylates and activates LATS1/2 in complex with its regulatory protein MOB1, which in turn phosphorylates and inactivates YAP1 oncoprotein and WWTR1/TAZ. Phosphorylation of YAP1 by LATS2 inhibits its translocation into the nucleus to regulate cellular genes important for cell proliferation, cell death, and cell migration. STK3/MST2 and STK4/MST1 are required to repress proliferation of mature hepatocytes, to prevent activation of facultative adult liver stem cells (oval cells), and to inhibit tumor formation. Phosphorylates NKX2-1. Phosphorylates NEK2 and plays a role in centrosome disjunction by regulating the localization of NEK2 to centrosome, and its ability to phosphorylate CROCC and CEP250. In conjunction with SAV1, activates the transcriptional activity of ESR1 through the modulation of its phosphorylation. Positively regulates RAF1 activation via suppression of the inhibitory phosphorylation of RAF1 on 'Ser-259'. Phosphorylates MOBKL1A and RASSF2. Phosphorylates MOBKL1B on 'Thr-74'. Acts cooperatively with MOBKL1B to activate STK38. This is Serine/threonine-protein kinase 3 from Homo sapiens (Human).